The chain runs to 474 residues: Glutathione synthetase (474 aa).

N-acetylalanine is present on Ala2. Substrate is bound at residue Arg125. Glu144 contacts ATP. 2 residues coordinate Mg(2+): Glu144 and Asn146. Residues 148–151 (VSAS), 214–216 (ERN), Gln220, and 267–270 (RDGY) each bind substrate. Residues Lys305, 364 to 373 (KPQREGGGNN), Tyr375, and 398 to 401 (MEKI) each bind ATP. Glu368 contacts Mg(2+). Ser415 is subject to Phosphoserine. Glu425 is a binding site for ATP. A substrate-binding site is contributed by Arg450. ATP-binding residues include Lys452 and Asp458. Position 461–462 (461–462 (VA)) interacts with substrate.

It belongs to the eukaryotic GSH synthase family. As to quaternary structure, homodimer. It depends on Mg(2+) as a cofactor.

The enzyme catalyses gamma-L-glutamyl-L-cysteine + glycine + ATP = glutathione + ADP + phosphate + H(+). It carries out the reaction gamma-L-glutamyl-(2S)-2-aminobutanoate + glycine + ATP = ophthalmate + ADP + phosphate + H(+). It functions in the pathway sulfur metabolism; glutathione biosynthesis; glutathione from L-cysteine and L-glutamate: step 2/2. Its function is as follows. Catalyzes the production of glutathione from gamma-glutamylcysteine and glycine in an ATP-dependent manner. Glutathione (gamma-glutamylcysteinylglycine, GSH) is the most abundant intracellular thiol in living aerobic cells and is required for numerous processes including the protection of cells against oxidative damage, amino acid transport, the detoxification of foreign compounds, the maintenance of protein sulfhydryl groups in a reduced state and acts as a cofactor for a number of enzymes. Participates in ophthalmate biosynthesis in hepatocytes. This Bos taurus (Bovine) protein is Glutathione synthetase.